The primary structure comprises 293 residues: Protease HtpX (293 aa).

The next 2 helical transmembrane spans lie at Ile4–Leu24 and Gly34–Ser54. His139 contacts Zn(2+). Glu140 is an active-site residue. A Zn(2+)-binding site is contributed by His143. A run of 2 helical transmembrane segments spans residues Val158 to Met178 and Leu193 to Ile213. Glu222 serves as a coordination point for Zn(2+).

Belongs to the peptidase M48B family. Zn(2+) is required as a cofactor.

The protein resides in the cell inner membrane. The chain is Protease HtpX from Escherichia fergusonii (strain ATCC 35469 / DSM 13698 / CCUG 18766 / IAM 14443 / JCM 21226 / LMG 7866 / NBRC 102419 / NCTC 12128 / CDC 0568-73).